Reading from the N-terminus, the 67-residue chain is Sec-independent protein translocase protein TatA (67 aa).

A helical transmembrane segment spans residues 1–21 (MMPGPFELIVILVIVLLLFGG).

Belongs to the TatA/E family. The Tat system comprises two distinct complexes: a TatABC complex, containing multiple copies of TatA, TatB and TatC subunits, and a separate TatA complex, containing only TatA subunits. Substrates initially bind to the TatABC complex, which probably triggers association of the separate TatA complex to form the active translocon.

It is found in the cell inner membrane. Functionally, part of the twin-arginine translocation (Tat) system that transports large folded proteins containing a characteristic twin-arginine motif in their signal peptide across membranes. TatA could form the protein-conducting channel of the Tat system. In Ruthia magnifica subsp. Calyptogena magnifica, this protein is Sec-independent protein translocase protein TatA.